Reading from the N-terminus, the 929-residue chain is Protocadherin gamma-B7 (929 aa).

An N-terminal signal peptide occupies residues 1–30 (MGGSCAQRRRAGPRQVLFPLLLPLFYPTLC). Cadherin domains are found at residues 31 to 133 (EPIR…APQF), 134 to 242 (RKDE…PPVF), 243 to 347 (SQDV…SPEI), 348 to 452 (IITS…APVF), 453 to 562 (GQSA…APRV), and 570 to 675 (DGSA…LPDF). At 31 to 691 (EPIRYSIPEE…SDSQAEMQFY (661 aa)) the chain is on the extracellular side. Residues N419 and N545 are each glycosylated (N-linked (GlcNAc...) asparagine). A helical transmembrane segment spans residues 692–712 (LVVALALISVLFLLAVILAIA). Residues 713–929 (LRLRQSFSPT…KKKSGKKEKK (217 aa)) are Cytoplasmic-facing. 2 disordered regions span residues 806–838 (QAPP…WPNN) and 899–929 (ATLT…KEKK). Residues 807–838 (APPNTDWRFSQAQRPGTSGSQNGDDTGTWPNN) are compositionally biased toward polar residues. The span at 919–929 (NKKKSGKKEKK) shows a compositional bias: basic residues.

The protein localises to the cell membrane. Its function is as follows. Potential calcium-dependent cell-adhesion protein. May be involved in the establishment and maintenance of specific neuronal connections in the brain. This is Protocadherin gamma-B7 (PCDHGB7) from Homo sapiens (Human).